Reading from the N-terminus, the 122-residue chain is Small ribosomal subunit protein bS6 (122 aa).

This sequence belongs to the bacterial ribosomal protein bS6 family.

Binds together with bS18 to 16S ribosomal RNA. This is Small ribosomal subunit protein bS6 from Neisseria gonorrhoeae (strain ATCC 700825 / FA 1090).